The primary structure comprises 337 residues: Hsp90 co-chaperone Cdc37-like 1 (337 aa).

Over residues 1 to 11 (MEQPWPPPGPW) the composition is skewed to pro residues. The segment at 1-43 (MEQPWPPPGPWSLPRAEGEAEEESDLDLSPGSPRCPQLPGGGT) is disordered. The tract at residues 2–171 (EQPWPPPGPW…HEQKIRHFGM (170 aa)) is self-association. Ser-32 and Ser-88 each carry phosphoserine. A coiled-coil region spans residues 84-122 (HNSESLDQEHAKAQTAISELRQREEEWRQKEEALVQRER). Positions 147 to 277 (KETEDEDKSK…SRVRLYSQSP (131 aa)) are self-association and interaction with Hsp90. Residues 267-337 (KSRVRLYSQS…DDEPKMMDTV (71 aa)) are interaction with Hsp70. The interval 278–337 (NFQPVTVQNHVPHSGVGSIGLLESLPQNPDYLQYSINTALCSLNSVVHKEDDEPKMMDTV) is required for interaction with STIP1.

The protein belongs to the CDC37 family. As to quaternary structure, self-associates. Forms complexes with Hsp70 and Hsp90. Interacts with CDC37, FKBP4, PPID and STIP1.

Its subcellular location is the cytoplasm. Its function is as follows. Co-chaperone that binds to numerous proteins and promotes their interaction with Hsp70 and Hsp90. The sequence is that of Hsp90 co-chaperone Cdc37-like 1 (CDC37L1) from Bos taurus (Bovine).